The sequence spans 466 residues: UDP-N-acetylmuramoylalanine--D-glutamate ligase (466 aa).

Residue 139–145 participates in ATP binding; that stretch reads GTAGKGG.

Belongs to the MurCDEF family.

It localises to the cytoplasm. It catalyses the reaction UDP-N-acetyl-alpha-D-muramoyl-L-alanine + D-glutamate + ATP = UDP-N-acetyl-alpha-D-muramoyl-L-alanyl-D-glutamate + ADP + phosphate + H(+). It functions in the pathway cell wall biogenesis; peptidoglycan biosynthesis. Functionally, cell wall formation. Catalyzes the addition of glutamate to the nucleotide precursor UDP-N-acetylmuramoyl-L-alanine (UMA). This chain is UDP-N-acetylmuramoylalanine--D-glutamate ligase, found in Deinococcus geothermalis (strain DSM 11300 / CIP 105573 / AG-3a).